A 215-amino-acid chain; its full sequence is Cytochrome b6 (215 aa).

A helical membrane pass occupies residues 32–52; that stretch reads IFYCLGGITLTCFLVQVATGF. Cys35 is a binding site for heme c. Residues His86 and His100 each coordinate heme b. Helical transmembrane passes span 90–110, 116–136, and 186–206; these read ASMM…TGGF, LTWV…VTGY, and LHTF…FPMI. Positions 187 and 202 each coordinate heme b.

It belongs to the cytochrome b family. PetB subfamily. As to quaternary structure, the 4 large subunits of the cytochrome b6-f complex are cytochrome b6, subunit IV (17 kDa polypeptide, PetD), cytochrome f and the Rieske protein, while the 4 small subunits are PetG, PetL, PetM and PetN. The complex functions as a dimer. Heme b is required as a cofactor. It depends on heme c as a cofactor.

It localises to the plastid. It is found in the chloroplast thylakoid membrane. Component of the cytochrome b6-f complex, which mediates electron transfer between photosystem II (PSII) and photosystem I (PSI), cyclic electron flow around PSI, and state transitions. This is Cytochrome b6 from Phalaenopsis aphrodite subsp. formosana (Moth orchid).